The chain runs to 80 residues: Large ribosomal subunit protein uL24 (80 aa).

This sequence belongs to the universal ribosomal protein uL24 family. In terms of assembly, part of the 50S ribosomal subunit.

One of two assembly initiator proteins, it binds directly to the 5'-end of the 23S rRNA, where it nucleates assembly of the 50S subunit. In terms of biological role, one of the proteins that surrounds the polypeptide exit tunnel on the outside of the subunit. The polypeptide is Large ribosomal subunit protein uL24 (Chlorobaculum parvum (strain DSM 263 / NCIMB 8327) (Chlorobium vibrioforme subsp. thiosulfatophilum)).